A 192-amino-acid chain; its full sequence is Putative 3-methyladenine DNA glycosylase (192 aa).

Belongs to the DNA glycosylase MPG family.

This chain is Putative 3-methyladenine DNA glycosylase, found in Methanoculleus marisnigri (strain ATCC 35101 / DSM 1498 / JR1).